The chain runs to 631 residues: Probable potassium transport system protein Kup (631 aa).

12 consecutive transmembrane segments (helical) span residues 17–37, 56–76, 109–129, 147–167, 174–194, 215–235, 256–276, 288–308, 346–366, 378–398, 403–423, and 428–448; these read IGLL…SPLY, ILGV…FKYM, MMMV…SMIT, GLDH…FLIQ, IGVL…ALGV, FFII…LALT, WFIL…ALVL, LLAP…ATII, IYIG…VIGF, VAVT…MLML, PLLA…FFAA, and IFQG…LMTT.

The protein belongs to the HAK/KUP transporter (TC 2.A.72) family.

It is found in the cell inner membrane. It catalyses the reaction K(+)(in) + H(+)(in) = K(+)(out) + H(+)(out). Transport of potassium into the cell. Likely operates as a K(+):H(+) symporter. The sequence is that of Probable potassium transport system protein Kup from Pseudomonas syringae pv. tomato (strain ATCC BAA-871 / DC3000).